The sequence spans 368 residues: Phospho-N-acetylmuramoyl-pentapeptide-transferase (368 aa).

Transmembrane regions (helical) follow at residues 30-50, 72-92, 99-119, 135-155, 170-190, 201-221, 238-258, 265-286, and 345-365; these read AAAI…IAYL, LPTM…FLWA, VWLV…DDYL, LIGQ…DPSM, LTIN…TAIS, GLAA…AYLA, GGEV…FLWF, IIMG…ALLI, and KIVI…LMTL.

The protein belongs to the glycosyltransferase 4 family. MraY subfamily. It depends on Mg(2+) as a cofactor.

The protein resides in the cell inner membrane. The enzyme catalyses UDP-N-acetyl-alpha-D-muramoyl-L-alanyl-gamma-D-glutamyl-meso-2,6-diaminopimeloyl-D-alanyl-D-alanine + di-trans,octa-cis-undecaprenyl phosphate = di-trans,octa-cis-undecaprenyl diphospho-N-acetyl-alpha-D-muramoyl-L-alanyl-D-glutamyl-meso-2,6-diaminopimeloyl-D-alanyl-D-alanine + UMP. It participates in cell wall biogenesis; peptidoglycan biosynthesis. Catalyzes the initial step of the lipid cycle reactions in the biosynthesis of the cell wall peptidoglycan: transfers peptidoglycan precursor phospho-MurNAc-pentapeptide from UDP-MurNAc-pentapeptide onto the lipid carrier undecaprenyl phosphate, yielding undecaprenyl-pyrophosphoryl-MurNAc-pentapeptide, known as lipid I. This Chlorobium chlorochromatii (strain CaD3) protein is Phospho-N-acetylmuramoyl-pentapeptide-transferase.